Reading from the N-terminus, the 115-residue chain is MLRIYHSQLTLLSHSTPWPSLTKSVRCTHIIIHGTCLSGLYPVQFTHKTHDYPHFNIYISFSGSKYCITALNAYIIPLLLHILTIQFIHTYFNIPTKSPLKLPKHKNILLFNNNT.

It belongs to the UPF0320 family.

In Saccharomyces cerevisiae (strain ATCC 204508 / S288c) (Baker's yeast), this protein is Putative UPF0320 protein YKL225W.